The chain runs to 134 residues: Large ribosomal subunit protein bL21 (134 aa).

Belongs to the bacterial ribosomal protein bL21 family. In terms of assembly, part of the 50S ribosomal subunit. Contacts protein L20.

This protein binds to 23S rRNA in the presence of protein L20. The sequence is that of Large ribosomal subunit protein bL21 from Pelagibacter ubique (strain HTCC1062).